The chain runs to 948 residues: Valine--tRNA ligase (948 aa).

Positions 40–50 (PNVTGSLHMGH) match the 'HIGH' region motif. The 'KMSKS' region motif lies at 551 to 555 (KMSKS). Lysine 554 is a binding site for ATP. Residues 879–945 (LIDKGAELAR…GKLAEQHARI (67 aa)) are a coiled coil.

Belongs to the class-I aminoacyl-tRNA synthetase family. ValS type 1 subfamily. Monomer.

The protein localises to the cytoplasm. The enzyme catalyses tRNA(Val) + L-valine + ATP = L-valyl-tRNA(Val) + AMP + diphosphate. Its function is as follows. Catalyzes the attachment of valine to tRNA(Val). As ValRS can inadvertently accommodate and process structurally similar amino acids such as threonine, to avoid such errors, it has a 'posttransfer' editing activity that hydrolyzes mischarged Thr-tRNA(Val) in a tRNA-dependent manner. The chain is Valine--tRNA ligase from Pseudomonas syringae pv. tomato (strain ATCC BAA-871 / DC3000).